We begin with the raw amino-acid sequence, 190 residues long: Somatotropin (190 aa).

Histidine 19 contacts Zn(2+). Cysteines 52 and 163 form a disulfide. Phosphoserine is present on serine 105. Glutamate 172 provides a ligand contact to Zn(2+). An intrachain disulfide couples cysteine 180 to cysteine 188.

This sequence belongs to the somatotropin/prolactin family.

It localises to the secreted. Functionally, plays an important role in growth control. Its major role in stimulating body growth is to stimulate the liver and other tissues to secrete IGF1. It stimulates both the differentiation and proliferation of myoblasts. It also stimulates amino acid uptake and protein synthesis in muscle and other tissues. This is Somatotropin (GH1) from Vulpes vulpes (Red fox).